The sequence spans 395 residues: L-lactate dehydrogenase (395 aa).

Residues 1–380 (MIISAASDYR…SKDSLVQELS (380 aa)) form the FMN hydroxy acid dehydrogenase domain. Residue tyrosine 24 participates in substrate binding. Serine 106 and glutamine 127 together coordinate FMN. Tyrosine 129 serves as a coordination point for substrate. Residue threonine 155 participates in FMN binding. Arginine 164 is a substrate binding site. Lysine 251 contacts FMN. The active-site Proton acceptor is histidine 275. Arginine 278 is a binding site for substrate. 306–330 (DSGIRNGLDVVRMIALGADSVLLGR) lines the FMN pocket.

Belongs to the FMN-dependent alpha-hydroxy acid dehydrogenase family. The cofactor is FMN.

Its subcellular location is the cell inner membrane. It catalyses the reaction (S)-lactate + A = pyruvate + AH2. Its function is as follows. Catalyzes the conversion of L-lactate to pyruvate. Is coupled to the respiratory chain. The chain is L-lactate dehydrogenase from Enterobacter sp. (strain 638).